The following is a 162-amino-acid chain: uncharacterized protein (162 aa).

Helical transmembrane passes span 10–30 (ILSF…MLIL), 50–70 (IVEL…ALYN), 96–116 (IAQY…IILL), and 125–145 (FTAI…LFIF).

The protein localises to the cell membrane. This is an uncharacterized protein from Methanocaldococcus jannaschii (strain ATCC 43067 / DSM 2661 / JAL-1 / JCM 10045 / NBRC 100440) (Methanococcus jannaschii).